A 75-amino-acid chain; its full sequence is Dermaseptin-A3 (75 aa).

The signal sequence occupies residues 1–22; sequence MAFLKKSLFLVLLLGLISLSIC. A propeptide spanning residues 23 to 43 is cleaved from the precursor; that stretch reads EEEKRENEVEEEQEDDEQSEL. A Glutamine amide modification is found at Gln-72. Positions 74–75 are excised as a propeptide; that stretch reads EQ.

It belongs to the frog skin active peptide (FSAP) family. Dermaseptin subfamily. As to expression, expressed by the skin glands.

The protein resides in the secreted. In terms of biological role, possesses a potent antimicrobial activity against Gram-positive and Gram-negative bacteria. Probably acts by disturbing membrane functions with its amphipathic structure. The chain is Dermaseptin-A3 from Agalychnis annae (Blue-sided leaf frog).